We begin with the raw amino-acid sequence, 489 residues long: Probable capsid protein (489 aa).

The span at 87–101 shows a compositional bias: basic and acidic residues; that stretch reads RMERGESSETKREQQ. Positions 87–111 are disordered; it reads RMERGESSETKREQQDLGATRKRKI. The Nuclear localization signal signature appears at 107–110; sequence RKRK. The segment at 409-426 adopts a CCHC-type zinc-finger fold; that stretch reads CRCWICTEEGHYANECPN. Positions 466–489 are disordered; that stretch reads ETTSEEESTTDSDSSSSDDEQLSF.

This sequence belongs to the caulimoviridae capsid protein family. Interacts (via nuclear localization signal) with host importin alpha.

Its subcellular location is the virion. The protein localises to the host nucleus. In terms of biological role, self assembles to form an icosahedral capsid, about 50 nm in diameter, nm, composed of 420 subunits of the viral capsid protein. The capsid encapsulates the genomic dsDNA. Following virus entry into host cell, provides nuclear import of the viral genome. Virus particles do not enter the nucleus, but dock at the nuclear membrane through the interaction with host importins. This chain is Probable capsid protein, found in Scrophularia californica (California bee plant).